The chain runs to 116 residues: Small ribosomal subunit protein bS16 (116 aa).

It belongs to the bacterial ribosomal protein bS16 family.

The chain is Small ribosomal subunit protein bS16 from Chlamydia trachomatis serovar L2 (strain ATCC VR-902B / DSM 19102 / 434/Bu).